The following is a 195-amino-acid chain: Heavy metal-associated isoprenylated plant protein 18 (195 aa).

Disordered stretches follow at residues 36-76 (DVVQ…KPET) and 145-172 (EKEK…NPSS). Basic and acidic residues-rich tracts occupy residues 47–76 (TVTK…KPET) and 145–157 (EKEK…ITKD). Residues 78–149 (TRKLEIHIAF…RIVKMEKEKK (72 aa)) enclose the HMA domain. At Cys192 the chain carries Cysteine methyl ester. Cys192 carries S-farnesyl cysteine lipidation. A propeptide spans 193 to 195 (SIS) (removed in mature form).

It belongs to the HIPP family.

In terms of biological role, probable heavy-metal-binding protein. Required for female gametophyte development and function. The sequence is that of Heavy metal-associated isoprenylated plant protein 18 from Arabidopsis thaliana (Mouse-ear cress).